The following is a 188-amino-acid chain: Large ribosomal subunit protein bL32m (188 aa).

Zn(2+) contacts are provided by Cys-110, Cys-113, Cys-123, and Cys-126. Positions 164 to 188 (TPSEQDQGKRIIERDRKRPSWFTQN) are disordered. A compositionally biased stretch (basic and acidic residues) spans 169-181 (DQGKRIIERDRKR).

It belongs to the bacterial ribosomal protein bL32 family. Component of the mitochondrial large ribosomal subunit (mt-LSU). Mature mammalian 55S mitochondrial ribosomes consist of a small (28S) and a large (39S) subunit. The 28S small subunit contains a 12S ribosomal RNA (12S mt-rRNA) and 30 different proteins. The 39S large subunit contains a 16S rRNA (16S mt-rRNA), a copy of mitochondrial valine transfer RNA (mt-tRNA(Val)), which plays an integral structural role, and 52 different proteins. bL32m has a zinc binding site. Post-translationally, MRPL32 precursor is processed by the m-AAA protease (composed of AFG3L2 and SPG7), which cleaves the N-terminal transit peptide. Cleavage by the m-AAA protease takes place prior to assembly into the large subunit, an essential step for mitochondrial ribosome (mitoribosome) assembly. Proper processing by the m-AAA protease is dependent on the zinc-binding region within the tightly folded C-terminal domain of MRPL32: zinc-dependent folding halts degradation initiated from the N-terminus and triggers the release of mature MRPL32.

It is found in the mitochondrion. Its function is as follows. Component of the mitochondrial large ribosomal subunit (mt-LSU). The mitochondrial ribosome (mitoribosome) is a large ribonucleoprotein complex responsible for the synthesis of proteins inside mitochondria. The protein is Large ribosomal subunit protein bL32m (MRPL32) of Homo sapiens (Human).